A 486-amino-acid polypeptide reads, in one-letter code: D-mannonate oxidoreductase (486 aa).

Position 25–36 (25–36) interacts with NAD(+); sequence IVHLGCGAFHRA.

It belongs to the mannitol dehydrogenase family. UxuB subfamily.

It carries out the reaction D-mannonate + NAD(+) = keto-D-fructuronate + NADH + H(+). It functions in the pathway carbohydrate metabolism; pentose and glucuronate interconversion. The sequence is that of D-mannonate oxidoreductase (uxuB) from Escherichia coli (strain K12).